Reading from the N-terminus, the 61-residue chain is LECHNQQSSQPPTTKSCPGDTNCYNKRWRDHRGTIIERGCGCPTVKPGINLKCCTTDRCNN.

The segment covering 1–16 (LECHNQQSSQPPTTKS) has biased composition (polar residues). The tract at residues 1-20 (LECHNQQSSQPPTTKSCPGD) is disordered. Intrachain disulfides connect C3/C23, C17/C40, C42/C53, and C54/C59.

It belongs to the three-finger toxin family. Short-chain subfamily. Type I alpha-neurotoxin sub-subfamily. Expressed by the venom gland.

It is found in the secreted. In terms of biological role, binds to muscle nicotinic acetylcholine receptor (nAChR) and inhibit acetylcholine from binding to the receptor, thereby impairing neuromuscular transmission. In Hemachatus haemachatus (Rinkhals), this protein is Short neurotoxin 1.